Here is a 197-residue protein sequence, read N- to C-terminus: Ras-related protein RabG2 (197 aa).

GTP contacts are provided by residues 13-20, 61-65, and 119-122; these read GDSAVGKT, DTAGQ, and NKCD. Positions 175 to 197 are disordered; that stretch reads SKPSVVNPGSGGTSNTGGKKKFC. A lipid anchor (S-geranylgeranyl cysteine) is attached at Cys197.

The protein belongs to the small GTPase superfamily. Rab family.

The protein resides in the cell membrane. In Dictyostelium discoideum (Social amoeba), this protein is Ras-related protein RabG2 (rabG2).